A 293-amino-acid polypeptide reads, in one-letter code: MKVSVPATSANLGPGFDCLGLAVSLKNQVIIRPSKFHSVSLKGEGANNPALKDNNMFISIFNDFYQNLSHKKRFFRFEFQNEIPLSRGLGSSSAVIVSAIASAYAIEGIKLERDKLLNLALAYESHPDNITPAVMGGFNVACVQENEVKYINKPIPKSLKAVIVVPNRAISTAMSRKTLPFKYSKEDTIFNISHSSLLTAAFMSENWEMLKYASNDQVHQKYRMKQMPELFEVQKTALKEGALMSTLSGSGSTLFSMAYTDDSRNLEKALKNKFPHFRVFVVDFDNTGVKIEL.

84 to 94 (PLSRGLGSSSA) is an ATP binding site.

Belongs to the GHMP kinase family. Homoserine kinase subfamily.

The protein localises to the cytoplasm. It catalyses the reaction L-homoserine + ATP = O-phospho-L-homoserine + ADP + H(+). It participates in amino-acid biosynthesis; L-threonine biosynthesis; L-threonine from L-aspartate: step 4/5. Catalyzes the ATP-dependent phosphorylation of L-homoserine to L-homoserine phosphate. In Aliarcobacter butzleri (strain RM4018) (Arcobacter butzleri), this protein is Homoserine kinase.